A 380-amino-acid chain; its full sequence is MSKQIIYPGAVIGIIGGGQLGKMMAVSAKQMGYKVAVVDPVKDSPCGQVADVEITAHYNDREAIRKLAEISDIITYEFENIDYDALHWLKDHAYLPQGSELLLITQNRETEKKAIQSAGCEVAPYSIVKTKNELKQAVQELRLPAVLKTCRGGYDGKGQFVIKEEAQMEQAAALLEHGTCILESWVSFKMELSVIVVRSVNGEISTFPTAENIHHNNILFQSIVPARVEKGIQQKAADLAVKLADELNLVGPLAVEMFLTEDGELLVNELAPRPHNSGHYTLDLCETSQFEQHIRAVCGLPLGKTDLLKPGMMVNLLGDEVKLVEEDPELLKEAKLYIYGKHEIKKGRKMGHITFMKQPEDEWIQEITNKWMNRDGGQAE.

ATP is bound by residues R108, K148, 153 to 159 (GYDGKGQ), 183 to 186 (ESWV), E191, H214, and 268 to 269 (NE). The 187-residue stretch at 112–298 (KKAIQSAGCE…QFEQHIRAVC (187 aa)) folds into the ATP-grasp domain.

The protein belongs to the PurK/PurT family. As to quaternary structure, homodimer.

It catalyses the reaction 5-amino-1-(5-phospho-beta-D-ribosyl)imidazole + hydrogencarbonate + ATP = 5-carboxyamino-1-(5-phospho-D-ribosyl)imidazole + ADP + phosphate + 2 H(+). It participates in purine metabolism; IMP biosynthesis via de novo pathway; 5-amino-1-(5-phospho-D-ribosyl)imidazole-4-carboxylate from 5-amino-1-(5-phospho-D-ribosyl)imidazole (N5-CAIR route): step 1/2. In terms of biological role, catalyzes the ATP-dependent conversion of 5-aminoimidazole ribonucleotide (AIR) and HCO(3)(-) to N5-carboxyaminoimidazole ribonucleotide (N5-CAIR). This chain is N5-carboxyaminoimidazole ribonucleotide synthase, found in Bacillus subtilis (strain 168).